Here is a 577-residue protein sequence, read N- to C-terminus: 2-succinyl-5-enolpyruvyl-6-hydroxy-3-cyclohexene-1-carboxylate synthase (577 aa).

It belongs to the TPP enzyme family. MenD subfamily. As to quaternary structure, homodimer. Mg(2+) is required as a cofactor. The cofactor is Mn(2+). Requires thiamine diphosphate as cofactor.

The enzyme catalyses isochorismate + 2-oxoglutarate + H(+) = 5-enolpyruvoyl-6-hydroxy-2-succinyl-cyclohex-3-ene-1-carboxylate + CO2. It functions in the pathway quinol/quinone metabolism; 1,4-dihydroxy-2-naphthoate biosynthesis; 1,4-dihydroxy-2-naphthoate from chorismate: step 2/7. Its pathway is quinol/quinone metabolism; menaquinone biosynthesis. Catalyzes the thiamine diphosphate-dependent decarboxylation of 2-oxoglutarate and the subsequent addition of the resulting succinic semialdehyde-thiamine pyrophosphate anion to isochorismate to yield 2-succinyl-5-enolpyruvyl-6-hydroxy-3-cyclohexene-1-carboxylate (SEPHCHC). The protein is 2-succinyl-5-enolpyruvyl-6-hydroxy-3-cyclohexene-1-carboxylate synthase of Enterococcus faecalis (strain ATCC 700802 / V583).